Here is a 152-residue protein sequence, read N- to C-terminus: Smith-Magenis syndrome chromosomal region candidate gene 5 protein homolog (152 aa).

Positions 41–77 (TPCAGPSSQAPPQPPQASPPAAPDHSRTPSLLASSHS) are disordered. Pro residues predominate over residues 49–62 (QAPPQPPQASPPAA).

The sequence is that of Smith-Magenis syndrome chromosomal region candidate gene 5 protein homolog (SMCR5) from Macaca fascicularis (Crab-eating macaque).